The primary structure comprises 1454 residues: MYGYLRETDDSTAINFSAYGKFLPGENTGFQLLTIGAKFIRIFRVNPYVLKEPGEDNEEWQQKTKLECMFSCRLLNKCHSIAVARVPQLPDQDSILMTFDDAKLSIVSINEKERNMQTISLHAFENEYLRDGFINHFQPPLVRSDPSNRCAACLVYGKHIAILPFHENSKRIHSYVIPLKQIDPRLDNIADMVFLDGYYEPTILFLYEPIQTTPGRACVRYDTMCIMGVSVNIVDRQFAVVWQTANLPMDCSQLLPIPKPLGGALVFGSNTVVYLNQAVPPCGLVLNSCYDGFTKFPLKDLKHLKMTLDCSTSVYMEDGRIAVGSRDGDLFLLRLMTSSGGGTVKSLEFSKVYETSIAYSLTVCAPGHLFVGSRLGDSQLLEYTLLKTTRDCAVKRLKIDNKDPAAAEIELDEDDMELYGGAIEEQQNDDDEQIDESLQFRELDRLRNVGPVKSMCVGRPNYMSNDLVDAKRRDPVFDLVTASGHGKNGALCVHQRSLRPEIITSSLLEGAEQLWAVGRKENESHKYLIVSRVRSTLILELGEELVELEEQLFVTGEPTVAAGELSQGALAVQVTSTCIALVTDGQQMQEVHIDSNFPVIQASIVDPYVALLTQNGRLLLYELVMEPYVQLREVDISATSFATWHATAQNLTQLTSISIYADASEIMKFAAAEKSMGGGGGGDGEVSTAENAMMKKEQHEEAILLHGEDDDFLYGDEDETIMEQNFPVENGEATIKQSNTRKRKRLGHDAIQSSRGGEQSDAIDPTRTFSSISHWLIVSHENGRLSIHSLPEMEVVYQIGRFSNVPELLVDLTVEEEEKERKAKAQQAAKEASVPTDEAEQLNTEMKQLCERVLEAQIVGMGINQAHPILMAIVDEQVVLYEMFSSSNPIPGHLGISFRKLPHFICLRTSSHLNSDGKRAPFEMKINNGKRFSLIHPFERVSSVNNGVMIVGAVPTLLVYGAWGGMQTHQMTVDGPIKAFTPFNNENVLHGIVYMTQHKSELRIARMHPDFDYEMPYPVKKIEVGRTIHHVRYLMNSDVYAVVSSIPKPSNKIWVVMNDDKQEEIHEKDENFVLPAPPKYTLNLFSSQDWAAVPNTEISFEDMEAVTACEDVALKSESTISGLETLLAMGTVNNYGEEVLVRGRIILCEVIEVVPEPDQPTSNRKIKVLFDKEQKGPVTGLCAINGLLLCGMGQKVFIWQFKDNDLMGISFLDMHYYVYQLHSLRTIAIACDARESMSLIRFQEDNKAMSIASRDDRKCAQPPMASQLVVDGAHVGFLLSDETGNITMFNYAPEAPESNGGERLTVRAAINIGTNINAFVRLRGHTSLLQLNNEDEKEAIEQRMTTVFASLDGSFGFVRPLTEKSYRRLHFLQTFIGSVTPQIAGLHIKGSRSAKPSQPIVNGRNARNLIDGDVVEQYLHLSLYDKTDLARRLGVGRYHIIDDLMQLRRMAFYY.

The tract at residues 736-765 (KQSNTRKRKRLGHDAIQSSRGGEQSDAIDP) is disordered.

This sequence belongs to the CPSF1 family. CPSF is a heterotetramer composed of four distinct subunits 160 (cpsf-1), 100 (cpsf-2), 70 (cpsf-3), and 30 kDa (cpsf-4).

The protein resides in the nucleus. In terms of biological role, CPSF plays a key role in pre-mRNA 3'-end formation, recognizing the AAUAAA signal sequence and interacting with poly(A)polymerase and other factors to bring about cleavage and poly(A) addition. This subunit is involved in the RNA recognition step of the polyadenylation reaction. In Caenorhabditis elegans, this protein is Probable cleavage and polyadenylation specificity factor subunit 1 (cpsf-1).